Here is a 325-residue protein sequence, read N- to C-terminus: Terpene synthase 11 (325 aa).

Residues 97-102 (DDEYLE) carry the DDxx(x)D/E motif motif. The short motif at 227–235 (NDIYSFVKE) is the NDxxSxxxD/E motif element.

The protein belongs to the terpene synthase family.

It catalyses the reaction (2E,6E)-farnesyl diphosphate = (E)-beta-farnesene + diphosphate. It carries out the reaction (2E,6E)-farnesyl diphosphate = (3E,6E)-alpha-farnesene + diphosphate. The enzyme catalyses geranylgeranyl diphosphate + H2O = (S)-(+)-nephthenol + diphosphate. In terms of biological role, terpene synthase that converts its substrate farnesyl diphosphate (FPP) into the sesquiterpenes (E)-beta-farnesene and (E,E)-alpha-farnesene. TPS11 also converts geranylgeranyl diphosphate (GGPP) into the diterpene (S)-nephthenol. The protein is Terpene synthase 11 of Dictyostelium purpureum (Slime mold).